Here is a 241-residue protein sequence, read N- to C-terminus: 1-(5-phosphoribosyl)-5-[(5-phosphoribosylamino)methylideneamino] imidazole-4-carboxamide isomerase (241 aa).

The active-site Proton acceptor is the D7. D129 functions as the Proton donor in the catalytic mechanism.

The protein belongs to the HisA/HisF family.

The protein resides in the cytoplasm. It carries out the reaction 1-(5-phospho-beta-D-ribosyl)-5-[(5-phospho-beta-D-ribosylamino)methylideneamino]imidazole-4-carboxamide = 5-[(5-phospho-1-deoxy-D-ribulos-1-ylimino)methylamino]-1-(5-phospho-beta-D-ribosyl)imidazole-4-carboxamide. Its pathway is amino-acid biosynthesis; L-histidine biosynthesis; L-histidine from 5-phospho-alpha-D-ribose 1-diphosphate: step 4/9. In Buchnera aphidicola subsp. Baizongia pistaciae (strain Bp), this protein is 1-(5-phosphoribosyl)-5-[(5-phosphoribosylamino)methylideneamino] imidazole-4-carboxamide isomerase.